Consider the following 221-residue polypeptide: MKFFIDTANLDEIKEAHSLGILDGVTTNPSLIAKEGIANREDFIRHIKTICELIQAPVSAEAVSTDAEKMIVEARSLAAIDPHVVVKIPMTIDGLKAVRQLSEEGIKTNVTLVFSPLQALMAAKAGATYISPFVGRLDDISADGMNLVEEILEIFSNYLFETEIIVASVRNPLHVLAAAKLGADIATIPFKVIDQLAHHPLTDLGVERFLKDWEKVEKQRV.

Catalysis depends on Lys-87, which acts as the Schiff-base intermediate with substrate.

It belongs to the transaldolase family. Type 3B subfamily.

The protein resides in the cytoplasm. The enzyme catalyses D-sedoheptulose 7-phosphate + D-glyceraldehyde 3-phosphate = D-erythrose 4-phosphate + beta-D-fructose 6-phosphate. It participates in carbohydrate degradation; pentose phosphate pathway; D-glyceraldehyde 3-phosphate and beta-D-fructose 6-phosphate from D-ribose 5-phosphate and D-xylulose 5-phosphate (non-oxidative stage): step 2/3. Its function is as follows. Transaldolase is important for the balance of metabolites in the pentose-phosphate pathway. This is Probable transaldolase from Syntrophobacter fumaroxidans (strain DSM 10017 / MPOB).